The sequence spans 211 residues: ATP-dependent Clp protease proteolytic subunit (211 aa).

The Nucleophile role is filled by serine 114. The active site involves histidine 139.

This sequence belongs to the peptidase S14 family. As to quaternary structure, fourteen ClpP subunits assemble into 2 heptameric rings which stack back to back to give a disk-like structure with a central cavity, resembling the structure of eukaryotic proteasomes.

It is found in the cytoplasm. It carries out the reaction Hydrolysis of proteins to small peptides in the presence of ATP and magnesium. alpha-casein is the usual test substrate. In the absence of ATP, only oligopeptides shorter than five residues are hydrolyzed (such as succinyl-Leu-Tyr-|-NHMec, and Leu-Tyr-Leu-|-Tyr-Trp, in which cleavage of the -Tyr-|-Leu- and -Tyr-|-Trp bonds also occurs).. In terms of biological role, cleaves peptides in various proteins in a process that requires ATP hydrolysis. Has a chymotrypsin-like activity. Plays a major role in the degradation of misfolded proteins. This chain is ATP-dependent Clp protease proteolytic subunit, found in Pseudomonas fluorescens (strain Pf0-1).